A 170-amino-acid chain; its full sequence is Myosin regulatory light chain 1 (170 aa).

The span at 1–13 (MSKAAKKKSSKKR) shows a compositional bias: basic residues. Residues 1 to 22 (MSKAAKKKSSKKRSGSEAAQFD) form a disordered region. EF-hand domains follow at residues 24-59 (KTIQ…MGQI) and 93-128 (DPEA…KRGE). Residues D37, N39, D41, and D48 each contribute to the Ca(2+) site.

Myosin is a hexamer of 2 heavy chains and 4 light chains (two regulatory light chains and two essential light chains).

In Caenorhabditis elegans, this protein is Myosin regulatory light chain 1 (mlc-1).